The primary structure comprises 1772 residues: Putative stereocilin-like protein (1772 aa).

Positions Met-1–Ala-25 are cleaved as a signal peptide. Residues Asn-65, Asn-427, Asn-476, and Asn-565 are each glycosylated (N-linked (GlcNAc...) asparagine).

This sequence belongs to the stereocilin family.

Its subcellular location is the secreted. The sequence is that of Putative stereocilin-like protein (STRCP1) from Homo sapiens (Human).